A 159-amino-acid polypeptide reads, in one-letter code: Nascent polypeptide-associated complex subunit beta (159 aa).

2 disordered regions span residues 1 to 39 (MDMEKLKRMQARGGVRTGDGKGTPRRKVKNVHKSTGMDD) and 124 to 159 (QSMQKAEGGEEKKDDEEDDDDIPDLVEGENFEDKVE). Basic residues predominate over residues 23 to 32 (TPRRKVKNVH). The NAC-A/B domain occupies 36–101 (GMDDKKLQTS…GEDKELTELV (66 aa)). The span at 136–153 (KDDEEDDDDIPDLVEGEN) shows a compositional bias: acidic residues.

The protein belongs to the NAC-beta family. As to quaternary structure, part of the nascent polypeptide-associated complex (NAC), consisting of EGD2 and EGD1. NAC associates with ribosomes via EGD1.

The protein resides in the cytoplasm. The protein localises to the nucleus. Its function is as follows. Component of the nascent polypeptide-associated complex (NAC), a dynamic component of the ribosomal exit tunnel, protecting the emerging polypeptides from interaction with other cytoplasmic proteins to ensure appropriate nascent protein targeting. The NAC complex also promotes mitochondrial protein import by enhancing productive ribosome interactions with the outer mitochondrial membrane and blocks the inappropriate interaction of ribosomes translating non-secretory nascent polypeptides with translocation sites in the membrane of the endoplasmic reticulum. EGD1 may act as a transcription factor that exert a negative effect on the expression of several genes that are transcribed by RNA polymerase II. The sequence is that of Nascent polypeptide-associated complex subunit beta (egd1) from Sclerotinia sclerotiorum (strain ATCC 18683 / 1980 / Ss-1) (White mold).